Consider the following 2909-residue polypeptide: Micronemal protein 15 (2909 aa).

The signal sequence occupies residues 1–29; that stretch reads MVFRATREPFRLPLVAAFIALFLLKGVTC. 11 N-linked (GlcNAc...) asparagine glycosylation sites follow: asparagine 512, asparagine 563, asparagine 792, asparagine 813, asparagine 986, asparagine 1007, asparagine 1057, asparagine 1142, asparagine 1319, asparagine 1395, and asparagine 1713. A TSP type-1 1 domain is found at 1755–1811; that stretch reads TAIVGEWGEWSACTGTCFSQWWTPKRTRTRLVLAELSHSQIPSVSETATCLDLPPCG. Residues 1937–2073 are disordered; it reads RRKGIMSRRR…RSQARNQTPD (137 aa). The span at 1967-1977 shows a compositional bias: polar residues; the sequence is SEQSGKASQNG. Residue asparagine 1976 is glycosylated (N-linked (GlcNAc...) asparagine). Basic residues predominate over residues 1978–1988; the sequence is SRRHRASRKQK. Residues 2004–2016 are compositionally biased toward polar residues; the sequence is GESTLHGTGTNAY. Basic residues predominate over residues 2049–2065; the sequence is KARRARRGAGRFRKSRS. Residue asparagine 2333 is glycosylated (N-linked (GlcNAc...) asparagine). In terms of domain architecture, TSP type-1 2 spans 2484–2549; it reads TCDYTEWSEW…EKCDWMPVCP (66 aa). Cystine bridges form between cysteine 2485-cysteine 2528, cysteine 2496-cysteine 2500, and cysteine 2542-cysteine 2548. Residues 2552–2587 are disordered; it reads EGEEEDDATGGVEPRGEPIVPPWSPERPTDENNQAM. Asparagine 2706 carries N-linked (GlcNAc...) asparagine glycosylation. Residues 2709-2729 traverse the membrane as a helical segment; sequence TWVICLLLGVGGGICFVLSCV. Asparagine 2751, asparagine 2768, and asparagine 2793 each carry an N-linked (GlcNAc...) asparagine glycan. The tract at residues 2759–2846 is disordered; sequence ESHKLRRQGN…IGQTSPTQQR (88 aa). The span at 2801-2815 shows a compositional bias: acidic residues; the sequence is PEEEPWQFEDRDEEP. Residues 2837–2846 show a composition bias toward polar residues; sequence IGQTSPTQQR.

As to quaternary structure, component of a complex, at least composed of cysteine repeat modular protein A (CRMPa), cysteine repeat modular protein B (CRMPb), micronemal protein 15 (MIC15) and thrombospondin type 1 domain-containing protein (TSP1).

Its subcellular location is the membrane. Its function is as follows. Required for rhoptry secretion. Plays a role in host cell invasion. This Toxoplasma gondii protein is Micronemal protein 15.